Consider the following 104-residue polypeptide: Nucleoid-associated protein Ccon26_18480 (104 aa).

Residues 16-34 (DVQKQAKQMEEESKNKEFG) are compositionally biased toward basic and acidic residues. The interval 16 to 38 (DVQKQAKQMEEESKNKEFGAKSG) is disordered.

The protein belongs to the YbaB/EbfC family. In terms of assembly, homodimer.

The protein resides in the cytoplasm. The protein localises to the nucleoid. Its function is as follows. Binds to DNA and alters its conformation. May be involved in regulation of gene expression, nucleoid organization and DNA protection. The sequence is that of Nucleoid-associated protein Ccon26_18480 from Campylobacter concisus (strain 13826).